The following is a 314-amino-acid chain: ATP synthase gamma chain (314 aa).

The protein belongs to the ATPase gamma chain family. As to quaternary structure, F-type ATPases have 2 components, CF(1) - the catalytic core - and CF(0) - the membrane proton channel. CF(1) has five subunits: alpha(3), beta(3), gamma(1), delta(1), epsilon(1). CF(0) has three main subunits: a, b and c.

The protein resides in the cellular thylakoid membrane. Produces ATP from ADP in the presence of a proton gradient across the membrane. The gamma chain is believed to be important in regulating ATPase activity and the flow of protons through the CF(0) complex. This chain is ATP synthase gamma chain, found in Synechococcus sp. (strain JA-3-3Ab) (Cyanobacteria bacterium Yellowstone A-Prime).